Reading from the N-terminus, the 138-residue chain is Integration host factor subunit beta (138 aa).

A compositionally biased stretch (basic and acidic residues) spans 81-98 (KAGKELRERVDRSLERQG). The disordered stretch occupies residues 81–138 (KAGKELRERVDRSLERQGDSSSEGEPVSLTAVKAARQAGGHHAAGFPAEATPTLVMSR).

It belongs to the bacterial histone-like protein family. As to quaternary structure, heterodimer of an alpha and a beta chain.

This protein is one of the two subunits of integration host factor, a specific DNA-binding protein that functions in genetic recombination as well as in transcriptional and translational control. The sequence is that of Integration host factor subunit beta from Ralstonia nicotianae (strain ATCC BAA-1114 / GMI1000) (Ralstonia solanacearum).